The chain runs to 257 residues: MLIQNTIFYSQEWRWAKFIKFLISQLDNYHCVEHKIASDFSYKESSYGSKKSKKNINLFTWGATHQKRINFARAVCINSPNYSVLNFLIIPKTSYNIPFLGVDFVSLPTSHLLVLDFQPSLKVENQFNSELLEQIIKLKKSCHSSLPVAEKMSEDVAKFFSPGLIWSRLAKHQDSDNLIENQLYDSFKEYLNLYLKTLFESEEVGHGLQQELINGQNDYLNYRRDNDPARPMLSSLFGKDFTESLINKVLFSTNKVL.

It belongs to the HY2 family.

It catalyses the reaction (3Z)-phycoerythrobilin + oxidized 2[4Fe-4S]-[ferredoxin] = 15,16-dihydrobiliverdin + reduced 2[4Fe-4S]-[ferredoxin] + 2 H(+). Functionally, catalyzes the two-electron reduction of the C2 and C3(1) diene system of 15,16-dihydrobiliverdin. This chain is Phycoerythrobilin:ferredoxin oxidoreductase (pebB), found in Prochlorococcus marinus subsp. pastoris (strain CCMP1986 / NIES-2087 / MED4).